We begin with the raw amino-acid sequence, 120 residues long: Chaperonin GroEL (120 aa).

Residue 23–27 (DGTTT) participates in ATP binding.

This sequence belongs to the chaperonin (HSP60) family. As to quaternary structure, forms a cylinder of 14 subunits composed of two heptameric rings stacked back-to-back. Interacts with the co-chaperonin GroES.

It is found in the cytoplasm. It carries out the reaction ATP + H2O + a folded polypeptide = ADP + phosphate + an unfolded polypeptide.. Together with its co-chaperonin GroES, plays an essential role in assisting protein folding. The GroEL-GroES system forms a nano-cage that allows encapsulation of the non-native substrate proteins and provides a physical environment optimized to promote and accelerate protein folding. The protein is Chaperonin GroEL of Mycolicibacterium chitae (Mycobacterium chitae).